Reading from the N-terminus, the 238-residue chain is 2,3,4,5-tetrahydropyridine-2,6-dicarboxylate N-acetyltransferase (238 aa).

It belongs to the transferase hexapeptide repeat family. DapH subfamily.

It catalyses the reaction (S)-2,3,4,5-tetrahydrodipicolinate + acetyl-CoA + H2O = L-2-acetamido-6-oxoheptanedioate + CoA. The protein operates within amino-acid biosynthesis; L-lysine biosynthesis via DAP pathway; LL-2,6-diaminopimelate from (S)-tetrahydrodipicolinate (acetylase route): step 1/3. Catalyzes the transfer of an acetyl group from acetyl-CoA to tetrahydrodipicolinate. The sequence is that of 2,3,4,5-tetrahydropyridine-2,6-dicarboxylate N-acetyltransferase from Clostridioides difficile (strain 630) (Peptoclostridium difficile).